We begin with the raw amino-acid sequence, 219 residues long: Ribose-5-phosphate isomerase A (219 aa).

Substrate-binding positions include 28-31, 81-84, and 94-97; these read SGST, DGAD, and KGGG. Glu-103 (proton acceptor) is an active-site residue. Lys-121 serves as a coordination point for substrate.

This sequence belongs to the ribose 5-phosphate isomerase family. Homodimer.

The catalysed reaction is aldehydo-D-ribose 5-phosphate = D-ribulose 5-phosphate. It participates in carbohydrate degradation; pentose phosphate pathway; D-ribose 5-phosphate from D-ribulose 5-phosphate (non-oxidative stage): step 1/1. Functionally, catalyzes the reversible conversion of ribose-5-phosphate to ribulose 5-phosphate. The protein is Ribose-5-phosphate isomerase A of Histophilus somni (strain 129Pt) (Haemophilus somnus).